The sequence spans 386 residues: Bifunctional enzyme IspD/IspF (386 aa).

The tract at residues 1–225 (MYNFVTLSIL…SCLSAPSSDT (225 aa)) is 2-C-methyl-D-erythritol 4-phosphate cytidylyltransferase. The 2-C-methyl-D-erythritol 2,4-cyclodiphosphate synthase stretch occupies residues 226–386 (LSGVGFDVHA…NLKYFDWTKI (161 aa)). A divalent metal cation contacts are provided by aspartate 232 and histidine 234. Residues 232 to 234 (DVH) and 258 to 259 (HS) each bind 4-CDP-2-C-methyl-D-erythritol 2-phosphate. Histidine 266 lines the a divalent metal cation pocket. 4-CDP-2-C-methyl-D-erythritol 2-phosphate-binding positions include 280 to 282 (DIG), 285 to 289 (FPDND), 356 to 359 (TTTE), phenylalanine 363, and arginine 366.

This sequence in the N-terminal section; belongs to the IspD/TarI cytidylyltransferase family. IspD subfamily. The protein in the C-terminal section; belongs to the IspF family. It depends on a divalent metal cation as a cofactor.

It catalyses the reaction 2-C-methyl-D-erythritol 4-phosphate + CTP + H(+) = 4-CDP-2-C-methyl-D-erythritol + diphosphate. The catalysed reaction is 4-CDP-2-C-methyl-D-erythritol 2-phosphate = 2-C-methyl-D-erythritol 2,4-cyclic diphosphate + CMP. It participates in isoprenoid biosynthesis; isopentenyl diphosphate biosynthesis via DXP pathway; isopentenyl diphosphate from 1-deoxy-D-xylulose 5-phosphate: step 2/6. Its pathway is isoprenoid biosynthesis; isopentenyl diphosphate biosynthesis via DXP pathway; isopentenyl diphosphate from 1-deoxy-D-xylulose 5-phosphate: step 4/6. Functionally, bifunctional enzyme that catalyzes the formation of 4-diphosphocytidyl-2-C-methyl-D-erythritol from CTP and 2-C-methyl-D-erythritol 4-phosphate (MEP) (IspD), and catalyzes the conversion of 4-diphosphocytidyl-2-C-methyl-D-erythritol 2-phosphate (CDP-ME2P) to 2-C-methyl-D-erythritol 2,4-cyclodiphosphate (ME-CPP) with a corresponding release of cytidine 5-monophosphate (CMP) (IspF). This Sulfurimonas denitrificans (strain ATCC 33889 / DSM 1251) (Thiomicrospira denitrificans (strain ATCC 33889 / DSM 1251)) protein is Bifunctional enzyme IspD/IspF.